The primary structure comprises 95 residues: UPF0358 protein BcerKBAB4_3775 (95 aa).

It belongs to the UPF0358 family.

This Bacillus mycoides (strain KBAB4) (Bacillus weihenstephanensis) protein is UPF0358 protein BcerKBAB4_3775.